A 229-amino-acid polypeptide reads, in one-letter code: Probable methylthioribulose-1-phosphate dehydratase (229 aa).

Cys-97 is a binding site for substrate. Residues His-115 and His-117 each coordinate Zn(2+). Glu-139 serves as the catalytic Proton donor/acceptor. His-195 contacts Zn(2+).

The protein belongs to the aldolase class II family. MtnB subfamily. Requires Zn(2+) as cofactor.

The protein resides in the cytoplasm. It carries out the reaction 5-(methylsulfanyl)-D-ribulose 1-phosphate = 5-methylsulfanyl-2,3-dioxopentyl phosphate + H2O. It participates in amino-acid biosynthesis; L-methionine biosynthesis via salvage pathway; L-methionine from S-methyl-5-thio-alpha-D-ribose 1-phosphate: step 2/6. Functionally, catalyzes the dehydration of methylthioribulose-1-phosphate (MTRu-1-P) into 2,3-diketo-5-methylthiopentyl-1-phosphate (DK-MTP-1-P). The sequence is that of Probable methylthioribulose-1-phosphate dehydratase from Acyrthosiphon pisum (Pea aphid).